The following is a 505-amino-acid chain: MYKKRKLAILIALLTGTAAAHGQTDLNSIEARLAALEKRLQDAETRASTAESRAASAEQKVQQLTQQQQQTQATTQQVARRTTQLEEKAERPGGFEFHGYARSGVIMNDSAASTKSGAYMTPAGETGGAIGRLGNQADTYVEMNLEHKQTLDNGATTRFKVMVADGQTTYNDWTASSSDLNVRQAFVELGNLPTFEGPFKGSTLWAGKRFDRDNFDIHWIDSDVVFLAGTGGGIYDVKWNDSLRSNFSLYGRNFGDIADSSNSVQNYIVSMNNFAGPVQMMVSGMRAKDNDDRQDANGNLVKGDAANTGVHALLGLHNESFYGLRDGTSKTALLYGHGLGAEVKGIGSDGALRPGANTWRFASYGTTPLSDRWFIAPAVLAQSSKDRYVDGDSYQWATLNLRLIQEVTQNFALAWEGSYQYMDLQPEGYNDRHAVNGSFYKLTFAPTFKVGSIGDFFSRPEIRFYTSWMDWSKKLDNYANDDALGSNGFKSGGEWSFGMQMETWF.

The N-terminal stretch at 1-22 (MYKKRKLAILIALLTGTAAAHG) is a signal peptide. Residues 44–94 (ETRASTAESRAASAEQKVQQLTQQQQQTQATTQQVARRTTQLEEKAERPGG) form a disordered region. Over residues 46-82 (RASTAESRAASAEQKVQQLTQQQQQTQATTQQVARRT) the composition is skewed to low complexity. Positions 83–93 (TQLEEKAERPG) are enriched in basic and acidic residues.

Belongs to the porin LamB (TC 1.B.3) family. In terms of assembly, homotrimer.

The protein resides in the cell outer membrane. Its function is as follows. Porin for sucrose uptake. In Klebsiella pneumoniae, this protein is Sucrose porin (scrY).